Here is a 252-residue protein sequence, read N- to C-terminus: MKWDEIGKNIAKEIEKEILPYFGRKDKSYVVGTSPSGDETEIFDKISEDIALKYLKSLNVNIVSEELGVIDNSSEWTVVIDPIDGSFNFINGIPFFAFCFGVFKNNEPYYGLTYEFLTKSFYEAYKGKGAYLNGRKIKVKDFNPNNIVISYYPSKKIDLEKLRNKVKRVRIFGAFGLEMCYVAKGTLDAVFDVRPKVRAVDIASSYIICKEAGALITDENGDELKFDLNATDRLNIIVANSKEMLDIILDLL.

Glu-65, Asp-81, Ile-83, and Asp-84 together coordinate Mg(2+). Substrate-binding positions include 84–86 (DGS), Arg-170, Phe-175, and Arg-194. Asp-201 provides a ligand contact to Mg(2+).

Belongs to the inositol monophosphatase superfamily. FBPase class 4 family. In terms of assembly, homodimer. Mg(2+) is required as a cofactor.

The catalysed reaction is beta-D-fructose 1,6-bisphosphate + H2O = beta-D-fructose 6-phosphate + phosphate. It catalyses the reaction a myo-inositol phosphate + H2O = myo-inositol + phosphate. With respect to regulation, IMPase activity is inhibited by Ca(2+) and Zn(2+). In contrast to mammalian I-1-P phosphatases, is not inhibited by Li(+) up to 100 mM. Phosphatase with broad specificity; it can dephosphorylate fructose 1,6-bisphosphate, both D and L isomers of inositol-1-phosphate (I-1-P), 2'-AMP, pNPP, beta-glycerol phosphate, and alpha-D-glucose-1-phosphate. Cannot hydrolyze glucose-6-phosphate, fructose-6-phosphate, NAD(+) or 5'-AMP. May be involved in the biosynthesis of a unique osmolyte, di-myo-inositol 1,1-phosphate. In Methanocaldococcus jannaschii (strain ATCC 43067 / DSM 2661 / JAL-1 / JCM 10045 / NBRC 100440) (Methanococcus jannaschii), this protein is Fructose-1,6-bisphosphatase/inositol-1-monophosphatase (suhB).